The sequence spans 144 residues: Dynein light chain Tctex-type protein 2B (144 aa).

This sequence belongs to the dynein light chain Tctex-type family. Light chain of the cytoplasmic dynein complex 2, a multisubunit complex composed at least of eleven different proteins. The cytoplasmic dynein 2 complex consists of two catalytic heavy chains (HCs) and a number of non-catalytic subunits presented by intermediate chains (ICs), light intermediate chains (LICs) and light chains (LCs). Among them, a heavy chain (DYNC2H1), two intermediate chains (DYNC2I2 and DYNC2I1), a light intermediate chain (DYNC2LI1), and a light chain (DYNLT2B) are unique to the dynein-2 complex, but a subset of the light chains are also shared by dynein-1 and dynein-2 complexes. The dimer DYNLT2B-DYNLT1/DYNLT3 interacts with DYNC2I1; this interaction is crucial for retrograde trafficking of ciliary proteins.

The protein resides in the dynein axonemal particle. Acts as one of several non-catalytic accessory components of the cytoplasmic dynein 2 complex (dynein-2 complex), a motor protein complex that drives the movement of cargos along microtubules within cilia and flagella in concert with the intraflagellar transport (IFT) system. Required for proper retrograde ciliary transport. The chain is Dynein light chain Tctex-type protein 2B (Dynlt2b) from Mus musculus (Mouse).